The sequence spans 272 residues: Tryptophan synthase alpha chain (272 aa).

Residues Glu49 and Asp60 each act as proton acceptor in the active site.

This sequence belongs to the TrpA family. As to quaternary structure, tetramer of two alpha and two beta chains.

It catalyses the reaction (1S,2R)-1-C-(indol-3-yl)glycerol 3-phosphate + L-serine = D-glyceraldehyde 3-phosphate + L-tryptophan + H2O. It functions in the pathway amino-acid biosynthesis; L-tryptophan biosynthesis; L-tryptophan from chorismate: step 5/5. The alpha subunit is responsible for the aldol cleavage of indoleglycerol phosphate to indole and glyceraldehyde 3-phosphate. The polypeptide is Tryptophan synthase alpha chain (Psychrobacter cryohalolentis (strain ATCC BAA-1226 / DSM 17306 / VKM B-2378 / K5)).